We begin with the raw amino-acid sequence, 305 residues long: UDP-3-O-acyl-N-acetylglucosamine deacetylase (305 aa).

Positions 79, 238, and 242 each coordinate Zn(2+). The Proton donor role is filled by histidine 265.

The protein belongs to the LpxC family. It depends on Zn(2+) as a cofactor.

It catalyses the reaction a UDP-3-O-[(3R)-3-hydroxyacyl]-N-acetyl-alpha-D-glucosamine + H2O = a UDP-3-O-[(3R)-3-hydroxyacyl]-alpha-D-glucosamine + acetate. It participates in glycolipid biosynthesis; lipid IV(A) biosynthesis; lipid IV(A) from (3R)-3-hydroxytetradecanoyl-[acyl-carrier-protein] and UDP-N-acetyl-alpha-D-glucosamine: step 2/6. Its function is as follows. Catalyzes the hydrolysis of UDP-3-O-myristoyl-N-acetylglucosamine to form UDP-3-O-myristoylglucosamine and acetate, the committed step in lipid A biosynthesis. The polypeptide is UDP-3-O-acyl-N-acetylglucosamine deacetylase (Sodalis glossinidius (strain morsitans)).